The chain runs to 647 residues: DNA ligase (647 aa).

Residues 30 to 34 (DEEYD), 79 to 80 (SM), and Glu105 each bind NAD(+). The active-site N6-AMP-lysine intermediate is the Lys107. The NAD(+) site is built by Arg128, Glu162, and Lys301. Residues Cys395, Cys398, Cys411, and Cys416 each contribute to the Zn(2+) site. Positions 570–647 (KSDGVIFGKT…ESAFNELVKE (78 aa)) constitute a BRCT domain.

It belongs to the NAD-dependent DNA ligase family. LigA subfamily. Mg(2+) serves as cofactor. The cofactor is Mn(2+).

The catalysed reaction is NAD(+) + (deoxyribonucleotide)n-3'-hydroxyl + 5'-phospho-(deoxyribonucleotide)m = (deoxyribonucleotide)n+m + AMP + beta-nicotinamide D-nucleotide.. DNA ligase that catalyzes the formation of phosphodiester linkages between 5'-phosphoryl and 3'-hydroxyl groups in double-stranded DNA using NAD as a coenzyme and as the energy source for the reaction. It is essential for DNA replication and repair of damaged DNA. The chain is DNA ligase from Campylobacter jejuni subsp. jejuni serotype O:2 (strain ATCC 700819 / NCTC 11168).